The primary structure comprises 199 residues: Dephospho-CoA kinase (199 aa).

Positions 3-199 (RIGLTGGIGS…HCKYLQIAQT (197 aa)) constitute a DPCK domain. 11 to 16 (GSGKST) contributes to the ATP binding site.

This sequence belongs to the CoaE family.

Its subcellular location is the cytoplasm. It catalyses the reaction 3'-dephospho-CoA + ATP = ADP + CoA + H(+). It functions in the pathway cofactor biosynthesis; coenzyme A biosynthesis; CoA from (R)-pantothenate: step 5/5. In terms of biological role, catalyzes the phosphorylation of the 3'-hydroxyl group of dephosphocoenzyme A to form coenzyme A. The polypeptide is Dephospho-CoA kinase (Coxiella burnetii (strain RSA 493 / Nine Mile phase I)).